The sequence spans 476 residues: Doublesex- and mab-3-related transcription factor 3 (476 aa).

Positions Cys29–Arg76 form a DNA-binding region, DM. 2 disordered regions span residues Asp89–Ala130 and Gly147–Cys195. Residues Asp102 to Gln121 are compositionally biased toward low complexity. The span at Asp165 to Glu174 shows a compositional bias: polar residues. Over residues Phe176–Ser185 the composition is skewed to basic and acidic residues. The region spanning Arg255 to Val290 is the DMA domain. Polar residues predominate over residues Asn418 to Arg432. Positions Asn418–Ser476 are disordered.

Belongs to the DMRT family. As to expression, expressed in the ventral spinal cord, in a restrical population of neurons migrating ventrically in the developing spinal cord at 11.5 dpc.

The protein localises to the nucleus. Its function is as follows. Probable transcription factor that plays a role in configuring the spinal circuits controlling stride in vertebrates. Involved in neuronal specification within specific subdivision of spinal cord neurons and in the development of a coordinated locomotor network controlling limb movements. May regulate transcription during sexual development. In Mus musculus (Mouse), this protein is Doublesex- and mab-3-related transcription factor 3 (Dmrt3).